The primary structure comprises 421 residues: Proton extrusion protein PxcA (421 aa).

The disordered stretch occupies residues 124–153; it reads PTVHSSNPDDSQLMTSKNNSKPVPDPESDD. Polar residues predominate over residues 125-144; the sequence is TVHSSNPDDSQLMTSKNNSK. 4 helical membrane passes run 203 to 223, 298 to 318, 345 to 365, and 381 to 401; these read FVLL…SFIV, AIKN…LLIS, IIIL…WEVI, and FIFL…KYWI.

This sequence belongs to the CemA family.

Its subcellular location is the cell inner membrane. In terms of biological role, required for H(+) efflux immediately after light irradiation to form a rapid H(+) concentration gradient across the thylakoid membranes. Together with PxcL, contributes to transient H(+) uptake following dark to light transition. The sequence is that of Proton extrusion protein PxcA from Synechococcus sp. (strain ATCC 27144 / PCC 6301 / SAUG 1402/1) (Anacystis nidulans).